The primary structure comprises 695 residues: Glycine--tRNA ligase beta subunit (695 aa).

It belongs to the class-II aminoacyl-tRNA synthetase family. As to quaternary structure, tetramer of two alpha and two beta subunits.

It is found in the cytoplasm. The catalysed reaction is tRNA(Gly) + glycine + ATP = glycyl-tRNA(Gly) + AMP + diphosphate. This chain is Glycine--tRNA ligase beta subunit, found in Desulforamulus reducens (strain ATCC BAA-1160 / DSM 100696 / MI-1) (Desulfotomaculum reducens).